The chain runs to 331 residues: Flagellar P-ring protein (331 aa).

The first 25 residues, 1–25 (MKKRLAVLLVIVLTITFSFSVTTRI), serve as a signal peptide directing secretion.

Belongs to the FlgI family. As to quaternary structure, the basal body constitutes a major portion of the flagellar organelle and consists of four rings (L,P,S, and M) mounted on a central rod.

The protein localises to the periplasm. It is found in the bacterial flagellum basal body. Functionally, assembles around the rod to form the L-ring and probably protects the motor/basal body from shearing forces during rotation. The polypeptide is Flagellar P-ring protein (Thermotoga petrophila (strain ATCC BAA-488 / DSM 13995 / JCM 10881 / RKU-1)).